We begin with the raw amino-acid sequence, 118 residues long: Ribonuclease P protein component (118 aa).

It belongs to the RnpA family. Consists of a catalytic RNA component (M1 or rnpB) and a protein subunit.

The enzyme catalyses Endonucleolytic cleavage of RNA, removing 5'-extranucleotides from tRNA precursor.. Functionally, RNaseP catalyzes the removal of the 5'-leader sequence from pre-tRNA to produce the mature 5'-terminus. It can also cleave other RNA substrates such as 4.5S RNA. The protein component plays an auxiliary but essential role in vivo by binding to the 5'-leader sequence and broadening the substrate specificity of the ribozyme. In Shewanella putrefaciens (strain CN-32 / ATCC BAA-453), this protein is Ribonuclease P protein component.